We begin with the raw amino-acid sequence, 429 residues long: Enolase (429 aa).

Gln164 provides a ligand contact to (2R)-2-phosphoglycerate. The Proton donor role is filled by Glu206. Asp243, Glu286, and Asp313 together coordinate Mg(2+). (2R)-2-phosphoglycerate contacts are provided by Lys338, Arg367, Ser368, and Lys389. Lys338 functions as the Proton acceptor in the catalytic mechanism.

This sequence belongs to the enolase family. Homooctamer. Forms a ring-shaped particle. Mg(2+) serves as cofactor.

It localises to the cytoplasm. The protein localises to the secreted. The protein resides in the cell surface. It catalyses the reaction (2R)-2-phosphoglycerate = phosphoenolpyruvate + H2O. It participates in carbohydrate degradation; glycolysis; pyruvate from D-glyceraldehyde 3-phosphate: step 4/5. Its activity is regulated as follows. Inhibited by fluoride and phosphate. Functionally, catalyzes the reversible conversion of 2-phosphoglycerate (2-PG) into phosphoenolpyruvate (PEP). It is essential for the degradation of carbohydrates via glycolysis. This Thermotoga maritima (strain ATCC 43589 / DSM 3109 / JCM 10099 / NBRC 100826 / MSB8) protein is Enolase.